We begin with the raw amino-acid sequence, 182 residues long: Adenine phosphoribosyltransferase (182 aa).

The protein belongs to the purine/pyrimidine phosphoribosyltransferase family. In terms of assembly, homodimer.

The protein localises to the cytoplasm. The catalysed reaction is AMP + diphosphate = 5-phospho-alpha-D-ribose 1-diphosphate + adenine. It participates in purine metabolism; AMP biosynthesis via salvage pathway; AMP from adenine: step 1/1. In terms of biological role, catalyzes a salvage reaction resulting in the formation of AMP, that is energically less costly than de novo synthesis. This is Adenine phosphoribosyltransferase from Sulfurimonas denitrificans (strain ATCC 33889 / DSM 1251) (Thiomicrospira denitrificans (strain ATCC 33889 / DSM 1251)).